A 380-amino-acid chain; its full sequence is Chaperone protein DnaJ (380 aa).

A J domain is found at 5 to 70 (DYYEILGVTK…QKRAAYDRFG (66 aa)). Residues 137-215 (GKAETIKIPT…CQGAGRVNRE (79 aa)) form a CR-type zinc finger. C150, C153, C167, C170, C189, C192, C203, and C206 together coordinate Zn(2+). CXXCXGXG motif repeat units follow at residues 150–157 (CEVCDGSG), 167–174 (CPTCAGYG), 189–196 (CPNCHGRG), and 203–210 (CTACQGAG).

It belongs to the DnaJ family. Homodimer. Zn(2+) is required as a cofactor.

It is found in the cytoplasm. In terms of biological role, participates actively in the response to hyperosmotic and heat shock by preventing the aggregation of stress-denatured proteins and by disaggregating proteins, also in an autonomous, DnaK-independent fashion. Unfolded proteins bind initially to DnaJ; upon interaction with the DnaJ-bound protein, DnaK hydrolyzes its bound ATP, resulting in the formation of a stable complex. GrpE releases ADP from DnaK; ATP binding to DnaK triggers the release of the substrate protein, thus completing the reaction cycle. Several rounds of ATP-dependent interactions between DnaJ, DnaK and GrpE are required for fully efficient folding. Also involved, together with DnaK and GrpE, in the DNA replication of plasmids through activation of initiation proteins. This chain is Chaperone protein DnaJ, found in Methylobacterium radiotolerans (strain ATCC 27329 / DSM 1819 / JCM 2831 / NBRC 15690 / NCIMB 10815 / 0-1).